We begin with the raw amino-acid sequence, 201 residues long: Imidazole glycerol phosphate synthase subunit HisH 1 (201 aa).

Residues 1–201 enclose the Glutamine amidotransferase type-1 domain; that stretch reads MIALIDYKAG…LKLLENFARL (201 aa). Cys80 (nucleophile) is an active-site residue. Active-site residues include His183 and Glu185.

As to quaternary structure, heterodimer of HisH and HisF.

The protein localises to the cytoplasm. The enzyme catalyses 5-[(5-phospho-1-deoxy-D-ribulos-1-ylimino)methylamino]-1-(5-phospho-beta-D-ribosyl)imidazole-4-carboxamide + L-glutamine = D-erythro-1-(imidazol-4-yl)glycerol 3-phosphate + 5-amino-1-(5-phospho-beta-D-ribosyl)imidazole-4-carboxamide + L-glutamate + H(+). It carries out the reaction L-glutamine + H2O = L-glutamate + NH4(+). It functions in the pathway amino-acid biosynthesis; L-histidine biosynthesis; L-histidine from 5-phospho-alpha-D-ribose 1-diphosphate: step 5/9. In terms of biological role, IGPS catalyzes the conversion of PRFAR and glutamine to IGP, AICAR and glutamate. The HisH subunit provides the glutamine amidotransferase activity that produces the ammonia necessary to HisF for the synthesis of IGP and AICAR. This Campylobacter jejuni subsp. jejuni serotype O:23/36 (strain 81-176) protein is Imidazole glycerol phosphate synthase subunit HisH 1 (hisH1).